The primary structure comprises 575 residues: Amyloid-beta A4 precursor protein-binding family A member 3 (575 aa).

At Met1 the chain carries N-acetylmethionine. Positions 1–10 are enriched in polar residues; the sequence is MDFPTISRSP. 2 disordered regions span residues 1-50 and 118-211; these read MDFP…LSRM and CEEC…GPCD. At Ser11 the chain carries Phosphoserine. A compositionally biased stretch (acidic residues) spans 143-153; it reads EDPDEDSDSPE. The span at 156–184 shows a compositional bias: low complexity; that stretch reads EGASAEQEGSRSSSSSPEPWLETVPLVTP. At Ser171 the chain carries Phosphoserine. The required for interaction with NECAB3 stretch occupies residues 215–364; that stretch reads LLDGVIFGAR…QFLRESGIDP (150 aa). The PID domain occupies 217–381; it reads DGVIFGARYL…SPGACHLHNG (165 aa). Phosphoserine is present on Ser372. 2 PDZ domains span residues 394 to 480 and 485 to 560; these read EVHL…IVHC and TAII…TMPA.

Binds to the cytoplasmic domain of amyloid protein (APP) in vivo. Interacts with HIF1AN (via N-terminus). Interacts with NECAB3; seems to mediate the interaction between NECAB3 and HIF1AN. As to expression, expressed in all tissues examined with lower levels in brain and testis.

The protein resides in the cytoplasm. It is found in the perinuclear region. In terms of biological role, may modulate processing of the amyloid-beta precursor protein (APP) and hence formation of APP-beta. May enhance the activity of HIF1A in macrophages by inhibiting the activity of HIF1AN. The sequence is that of Amyloid-beta A4 precursor protein-binding family A member 3 (APBA3) from Homo sapiens (Human).